Here is a 636-residue protein sequence, read N- to C-terminus: MAPRPPTAKPQESVTFKDVAVNFTQEEWHHVGPAQRSLYRDVMLENYNHLVSLGYQVSKPEVIFKLEQGEEPWISEKEIQRPFCPDWKTRPESSRSPQQGVSEVFLRTNVLSHTTIGDIWNVAIQGHQESGRRHLGPEASSQKKITTLEKKIEQNKVGEDSSLSTDLVPQLDISSSIRPSDCKTFGNNLEHNSELVTQSNILAKKKPYKCDKCRKSFIHRSSLNKHEKIHKGDPYSNGTDQGAQSGRKHHECADCGKTFLWRTQLTEHQRIHTGEKPFECNVCGKAFRHSSSLGQHENAHTGEKPYQCSLCGKAFQRSSSLVQHQRIHTGEKPYRCNLCGRSFRHSTSLTQHEVTHSGEKPFQCKECGKAFSRCSSLVQHERTHTGEKPFECSICGRAFGQSPSLYKHMRIHKRSKPYQSNNFSLAFVPNTPLPQGEGLLTEVKSYHCNDCGKDFGHITDFSEHQRLHAGENSYGSEQTLLGQQSLSHPREKPYQCNVCGKAFKRSTSFIEHHRIHTGEKPYECNECGEAFSRLSSLTQHERTHTGEKPYECIDCGKAFSQSSSLIQHERTHTGEKPYECNECGRAFRKKTNLHDHQRTHTGEKPYACKECGRNFSRSSALTKHHRVHARNKLQES.

Positions 14-85 (VTFKDVAVNF…EKEIQRPFCP (72 aa)) constitute a KRAB domain. C2H2-type zinc fingers lie at residues 208–230 (YKCDKCRKSFIHRSSLNKHEKIH), 250–272 (HECADCGKTFLWRTQLTEHQRIH), 278–300 (FECNVCGKAFRHSSSLGQHENAH), 306–328 (YQCSLCGKAFQRSSSLVQHQRIH), 334–356 (YRCNLCGRSFRHSTSLTQHEVTH), 362–384 (FQCKECGKAFSRCSSLVQHERTH), and 390–412 (FECSICGRAFGQSPSLYKHMRIH). The interval 227–247 (EKIHKGDPYSNGTDQGAQSGR) is disordered. Lysine 444 is covalently cross-linked (Glycyl lysine isopeptide (Lys-Gly) (interchain with G-Cter in SUMO2)). 6 consecutive C2H2-type zinc fingers follow at residues 446 to 468 (YHCNDCGKDFGHITDFSEHQRLH), 494 to 516 (YQCNVCGKAFKRSTSFIEHHRIH), 522 to 544 (YECNECGEAFSRLSSLTQHERTH), 550 to 572 (YECIDCGKAFSQSSSLIQHERTH), 578 to 600 (YECNECGRAFRKKTNLHDHQRTH), and 606 to 628 (YACKECGRNFSRSSALTKHHRVH).

This sequence belongs to the krueppel C2H2-type zinc-finger protein family. Interacts (via N- and C-termini) with REST (via zinc-finger DNA-binding domain); the interaction inhibits REST repressor activity. As to expression, brain, spleen, thymus, and testis. Expressed in heart.

It localises to the nucleus. Its function is as follows. Inhibits the transcriptional repressor activity of REST by inhibiting its binding to DNA, thereby derepressing transcription of REST target genes. This chain is Zinc finger protein 90 (Zfp90), found in Mus musculus (Mouse).